We begin with the raw amino-acid sequence, 216 residues long: A-type ATP synthase subunit D (216 aa).

This sequence belongs to the V-ATPase D subunit family. Has multiple subunits with at least A(3), B(3), C, D, E, F, H, I and proteolipid K(x). Post-translationally, the N-terminus is blocked.

It localises to the cell membrane. Component of the A-type ATP synthase that produces ATP from ADP in the presence of a proton gradient across the membrane. The protein is A-type ATP synthase subunit D of Sulfurisphaera tokodaii (strain DSM 16993 / JCM 10545 / NBRC 100140 / 7) (Sulfolobus tokodaii).